The following is a 152-amino-acid chain: Ribonuclease HI (152 aa).

One can recognise an RNase H type-1 domain in the interval 1–142 (MDSKVVIYTD…ADKLAVQGRE (142 aa)). The Mg(2+) site is built by Asp10, Glu48, Asp70, and Asp134.

It belongs to the RNase H family. As to quaternary structure, monomer. Mg(2+) serves as cofactor.

The protein resides in the cytoplasm. The enzyme catalyses Endonucleolytic cleavage to 5'-phosphomonoester.. In terms of biological role, endonuclease that specifically degrades the RNA of RNA-DNA hybrids. In Rickettsia prowazekii (strain Madrid E), this protein is Ribonuclease HI (rnhA).